Here is a 165-residue protein sequence, read N- to C-terminus: Protein C2-DOMAIN ABA-RELATED 8 (165 aa).

Methionine 1 bears the N-acetylmethionine mark. The C2 domain occupies 1–106 (MENLVGLLRI…QGTDIQELTN (106 aa)). Residues arginine 21, aspartate 22, aspartate 27, aspartate 73, lysine 74, aspartate 75, and aspartate 81 each coordinate Ca(2+).

The protein belongs to the plant CAR protein family. In terms of assembly, binds to PYR/PYL/RCAR abscisic acid intracellular receptors in an ABA-independent manner, both at the plasma membrane and in the nucleus.

The protein localises to the cell membrane. Its subcellular location is the nucleus. Its function is as follows. Stimulates the GTPase/ATPase activities of Obg-like ATPases. Mediates the transient calcium-dependent interaction of PYR/PYL/RCAR abscisic acid (ABA) receptors with the plasma membrane and thus regulates ABA sensitivity. This chain is Protein C2-DOMAIN ABA-RELATED 8, found in Arabidopsis thaliana (Mouse-ear cress).